Reading from the N-terminus, the 500-residue chain is NAD(P)H-quinone oxidoreductase chain 4, chloroplastic (500 aa).

14 helical membrane passes run 3-23 (FFPW…VIFF), 37-57 (ICIC…HFQF), 84-104 (GLSI…TLAA), 111-129 (SRLF…IGSF), 134-154 (LLLF…LLSI), 167-187 (FILY…GVGL), 208-228 (ALEI…SPII), 242-262 (HYST…YGLI), 272-292 (AHSI…IYAA), 305-325 (IAYS…SITD), 330-350 (GAIL…FLAG), 386-406 (LALP…GIIT), 416-436 (ILIT…SLSM), and 462-482 (LFVS…PDFV).

Belongs to the complex I subunit 4 family.

The protein localises to the plastid. The protein resides in the chloroplast thylakoid membrane. The catalysed reaction is a plastoquinone + NADH + (n+1) H(+)(in) = a plastoquinol + NAD(+) + n H(+)(out). It catalyses the reaction a plastoquinone + NADPH + (n+1) H(+)(in) = a plastoquinol + NADP(+) + n H(+)(out). This is NAD(P)H-quinone oxidoreductase chain 4, chloroplastic from Panax ginseng (Korean ginseng).